An 888-amino-acid chain; its full sequence is Prodigiosin synthesizing transferase PigC (888 aa).

It belongs to the PigC family.

Its pathway is antibiotic biosynthesis; prodigiosin biosynthesis. In terms of biological role, involved in the biosynthesis of 2-methyl-3-n-amyl-pyrrole (MAP), one of the terminal products involved in the biosynthesis of the red antibiotic prodigiosin (Pig). Catalyzes the transfer of 2-methyl-3-n-amyl-pyrrole (MAP) to 4-methoxy-2,2'-bipyrrole-5-carbaldehyde (MBC) to yield prodigiosin. It is able to use substrates with a variety of monocyclic rings in place of the pyrrolic ring A of its natural substrate. The protein is Prodigiosin synthesizing transferase PigC of Serratia marcescens.